The chain runs to 1237 residues: Phosphorylase b kinase regulatory subunit alpha, skeletal muscle isoform (1237 aa).

Phosphoserine occurs at positions 629, 729, 735, and 758. The tract at residues 810-840 (LTELYGKVGKIRHWGLIRYISGILRKKVEAL) is calmodulin-binding. Serine 972 carries the phosphoserine; by autocatalysis modification. Serine 981 is modified (phosphoserine). Residues serine 985 and serine 1007 each carry the phosphoserine; by autocatalysis modification. The residue at position 1018 (serine 1018) is a Phosphoserine; by PKA. Residues serine 1020, serine 1023, and serine 1030 each carry the phosphoserine modification. The segment at 1021 to 1069 (TESQPNGGHSLGADLMSPSFLSPGTSVTPSSGSFPGHHTSKDSRQGQWQ) is disordered. Over residues 1042–1056 (SPGTSVTPSSGSFPG) the composition is skewed to low complexity. The interval 1060 to 1100 (SKDSRQGQWQRRRRLDGALNRVPIGFYQKVWKVLQKCHGLS) is calmodulin-binding. Phosphoserine is present on serine 1127. The S-farnesyl cysteine moiety is linked to residue cysteine 1234.

Belongs to the phosphorylase b kinase regulatory chain family. As to quaternary structure, hexadecamer of 4 heterotetramers, each composed of alpha, beta, gamma, and delta subunits. Alpha (PHKA1 or PHKA2) and beta (PHKB) are regulatory subunits, gamma (PHKG1 or PHKG2) is the catalytic subunit, and delta is calmodulin. Phosphorylation of Ser-1018 by PKA stimulates the dephosphorylation of the beta subunit and, thus, reverses the initial stimulation of PHK by the faster beta-subunit phosphorylation by PKA, that occurs in muscle in response to adrenaline. In terms of processing, cys-1234 is farnesylated, but the C-terminal tripeptide is not removed and the cysteine carboxyl is not methylated. In terms of tissue distribution, isoform 1 predominates in muscle, heart, brain and testis. Isoforms 1 and 2 are expressed in similar quantities in the other tissues. Isoform 3 is highly expressed in slow muscle and heart.

It localises to the cell membrane. The protein operates within glycan biosynthesis; glycogen metabolism. Its activity is regulated as follows. By phosphorylation of various serine residues and by calcium. In terms of biological role, phosphorylase b kinase catalyzes the phosphorylation of serine in certain substrates, including troponin I. The alpha chain may bind calmodulin. In Oryctolagus cuniculus (Rabbit), this protein is Phosphorylase b kinase regulatory subunit alpha, skeletal muscle isoform (PHKA1).